The sequence spans 488 residues: Cytochrome P450 71A24 (488 aa).

Residues 3-23 (MMMMIILLLCSIILITILFFK) traverse the membrane as a helical segment. Cys-433 is a binding site for heme.

The protein belongs to the cytochrome P450 family. Heme is required as a cofactor.

The protein localises to the membrane. The sequence is that of Cytochrome P450 71A24 (CYP71A24) from Arabidopsis thaliana (Mouse-ear cress).